Here is a 131-residue protein sequence, read N- to C-terminus: MSGRGKQGGKARAKSKSRSSRAGLQFPVGRIHRLLRKGNYAERIGAGAPVYLAAVLEYLTAEILELAGNASRDNKKTRIIPRHLQLAIRNDEELNKLLGGVTIAQGGVLPNIQAVLLPKKTESHHHKAQSK.

Residues 1 to 23 form a disordered region; sequence MSGRGKQGGKARAKSKSRSSRAG. Ser2 carries the N-acetylserine modification. The residue at position 2 (Ser2) is a Phosphoserine; by RPS6KA5. Arg4 bears the Citrulline; alternate mark. Arg4 bears the Symmetric dimethylarginine; by PRMT5; alternate mark. Lys6 bears the N6-(2-hydroxyisobutyryl)lysine mark. The span at 7 to 19 shows a compositional bias: basic residues; it reads QGGKARAKSKSRS. At Lys10 the chain carries N6-(2-hydroxyisobutyryl)lysine; alternate. Lys10 bears the N6-(beta-hydroxybutyryl)lysine; alternate mark. Lys10 is modified (N6-lactoyllysine; alternate). Lys10 is subject to N6-succinyllysine; alternate. Residue Lys14 is modified to N6-(beta-hydroxybutyryl)lysine. Residues Lys14 and Lys16 each participate in a glycyl lysine isopeptide (Lys-Gly) (interchain with G-Cter in ubiquitin) cross-link. Lys37 carries the N6-(2-hydroxyisobutyryl)lysine; alternate modification. Lys37 is subject to N6-(beta-hydroxybutyryl)lysine; alternate. Residue Lys37 is modified to N6-crotonyllysine; alternate. 2 positions are modified to N6-(2-hydroxyisobutyryl)lysine: Lys75 and Lys76. Lys96 carries the N6-(2-hydroxyisobutyryl)lysine; alternate modification. At Lys96 the chain carries N6-(beta-hydroxybutyryl)lysine; alternate. Lys96 carries the N6-succinyllysine; alternate modification. Lys96 is subject to N6-glutaryllysine; alternate. Gln105 carries the N5-methylglutamine modification. Residue Lys119 is modified to N6-(2-hydroxyisobutyryl)lysine; alternate. Lys119 is subject to N6-(beta-hydroxybutyryl)lysine; alternate. An N6-crotonyllysine; alternate mark is found at Lys119 and Lys120. Residues Lys119 and Lys120 each carry the N6-glutaryllysine; alternate modification. Lys120 is covalently cross-linked (Glycyl lysine isopeptide (Lys-Gly) (interchain with G-Cter in ubiquitin); alternate). Thr121 carries the post-translational modification Phosphothreonine; by DCAF1. Lys127 carries the post-translational modification N6-crotonyllysine.

It belongs to the histone H2A family. As to quaternary structure, the nucleosome is a histone octamer containing two molecules each of H2A, H2B, H3 and H4 assembled in one H3-H4 heterotetramer and two H2A-H2B heterodimers. The octamer wraps approximately 147 bp of DNA. Post-translationally, deiminated on Arg-4 in granulocytes upon calcium entry. Monoubiquitination of Lys-120 (H2AK119Ub) by RING1, TRIM37 and RNF2/RING2 complex gives a specific tag for epigenetic transcriptional repression and participates in X chromosome inactivation of female mammals. It is involved in the initiation of both imprinted and random X inactivation. Ubiquitinated H2A is enriched in inactive X chromosome chromatin. Ubiquitination of H2A functions downstream of methylation of 'Lys-27' of histone H3 (H3K27me). H2AK119Ub by RNF2/RING2 can also be induced by ultraviolet and may be involved in DNA repair. Monoubiquitination of Lys-120 (H2AK119Ub) by TRIM37 may promote transformation of cells in a number of breast cancers. Following DNA double-strand breaks (DSBs), it is ubiquitinated through 'Lys-63' linkage of ubiquitin moieties by the E2 ligase UBE2N and the E3 ligases RNF8 and RNF168, leading to the recruitment of repair proteins to sites of DNA damage. Ubiquitination at Lys-14 and Lys-16 (H2AK13Ub and H2AK15Ub, respectively) in response to DNA damage is initiated by RNF168 that mediates monoubiquitination at these 2 sites, and 'Lys-63'-linked ubiquitin are then conjugated to monoubiquitin; RNF8 is able to extend 'Lys-63'-linked ubiquitin chains in vitro. Deubiquitinated by USP51 at Lys-14 and Lys-16 (H2AK13Ub and H2AK15Ub, respectively) after damaged DNA is repaired. H2AK119Ub and ionizing radiation-induced 'Lys-63'-linked ubiquitination (H2AK13Ub and H2AK15Ub) are distinct events. In terms of processing, phosphorylation on Ser-2 (H2AS1ph) is enhanced during mitosis. Phosphorylation on Ser-2 by RPS6KA5/MSK1 directly represses transcription. Acetylation of H3 inhibits Ser-2 phosphorylation by RPS6KA5/MSK1. Phosphorylation at Thr-121 (H2AT120ph) by DCAF1 is present in the regulatory region of many tumor suppresor genes and down-regulates their transcription. Post-translationally, glutamine methylation at Gln-105 (H2AQ104me) by FBL is specifically dedicated to polymerase I. It is present at 35S ribosomal DNA locus and impairs binding of the FACT complex. Symmetric dimethylation on Arg-4 by the PRDM1/PRMT5 complex may play a crucial role in the germ-cell lineage. In terms of processing, crotonylation (Kcr) is specifically present in male germ cells and marks testis-specific genes in post-meiotic cells, including X-linked genes that escape sex chromosome inactivation in haploid cells. Crotonylation marks active promoters and enhancers and confers resistance to transcriptional repressors. It is also associated with post-meiotically activated genes on autosomes. Post-translationally, lactylated in macrophages by EP300/P300 by using lactoyl-CoA directly derived from endogenous or exogenous lactate, leading to stimulates gene transcription.

It localises to the nucleus. Its subcellular location is the chromosome. Functionally, core component of nucleosome. Nucleosomes wrap and compact DNA into chromatin, limiting DNA accessibility to the cellular machineries which require DNA as a template. Histones thereby play a central role in transcription regulation, DNA repair, DNA replication and chromosomal stability. DNA accessibility is regulated via a complex set of post-translational modifications of histones, also called histone code, and nucleosome remodeling. The protein is Histone H2A type 1-A of Homo sapiens (Human).